The primary structure comprises 629 residues: tRNA uridine 5-carboxymethylaminomethyl modification enzyme MnmG (629 aa).

An FAD-binding site is contributed by 13-18 (GGGHAG). NAD(+) is bound at residue 273 to 287 (GPRYCPSIEDKITRF).

It belongs to the MnmG family. Homodimer. Heterotetramer of two MnmE and two MnmG subunits. Requires FAD as cofactor.

It is found in the cytoplasm. In terms of biological role, NAD-binding protein involved in the addition of a carboxymethylaminomethyl (cmnm) group at the wobble position (U34) of certain tRNAs, forming tRNA-cmnm(5)s(2)U34. This Aeromonas hydrophila subsp. hydrophila (strain ATCC 7966 / DSM 30187 / BCRC 13018 / CCUG 14551 / JCM 1027 / KCTC 2358 / NCIMB 9240 / NCTC 8049) protein is tRNA uridine 5-carboxymethylaminomethyl modification enzyme MnmG.